The chain runs to 222 residues: MVTLYLHVPILLLVVITARAAPKPDTHNPFDELSSVAEKQDLHYGDRSRKDPFIAQNDVGNNFRDGTQENLTKVRSKVNQYDQPFTFKCPLGETIKSIGSIHDNHYEDRQWDIDCKPAGYTMGISTWSPYANDYDGSMNFECNEGSVVTGMSSIHDNYYEDRRYQLMCSYLNNWKRGSCAWTSYTTYDASFVELTPTGKFLVGMKSQHNNYYEDRKFKMLYC.

The signal sequence occupies residues 1–20 (MVTLYLHVPILLLVVITARA). Residues 21 to 75 (APKPDTHNPFDELSSVAEKQDLHYGDRSRKDPFIAQNDVGNNFRDGTQENLTKVR) constitute a propeptide that is removed on maturation. Disulfide bonds link Cys-89-Cys-115, Cys-142-Cys-168, and Cys-179-Cys-222. Repeats lie at residues 100-109 (SIHDNHYEDR), 153-162 (SIHDNYYEDR), and 206-215 (SQHNNYYEDR).

The protein belongs to the dermatopontin family. In terms of processing, is not glycosylated.

It localises to the secreted. Its subcellular location is the nematocyst. Is potently cytotoxic (EC(50) value 79 ng/mL) towards L1210 mouse leukemia cells, has hemagglutination activity on sheep erythrocytes, and is lethal in crayfish. Has no phospholipase A2 activity. The protein is Millepora cytotoxin-1 of Millepora dichotoma (Net fire coral).